The sequence spans 299 residues: Putative pyrroline-5-carboxylate reductase 4 (299 aa).

The protein belongs to the pyrroline-5-carboxylate reductase family.

It carries out the reaction L-proline + NADP(+) = (S)-1-pyrroline-5-carboxylate + NADPH + 2 H(+). It catalyses the reaction L-proline + NAD(+) = (S)-1-pyrroline-5-carboxylate + NADH + 2 H(+). The protein operates within amino-acid biosynthesis; L-proline biosynthesis; L-proline from L-glutamate 5-semialdehyde: step 1/1. This is Putative pyrroline-5-carboxylate reductase 4 from Caenorhabditis elegans.